The following is a 255-amino-acid chain: MALAEAPRPGPLMDPEWHGSPEGKEYLGCILRKKKRKFFGLIERPVLSPQLPADIASYKLFVCGRSGAGKTSFIAKLAGLEVPSMHHETTGIQTTCVYWPVRPTHSARPVIFRFQFWDCGEGALRKFDHILPACKEMADAVLFLFSFTDRSSFEDVPALISRTLGQEEDVARVVIGTKLDQYTHTDVTENDLRDFQRTWQLPVMRVRSVNGPRVAEGRGLDGRVGLVECAPVLNGLAEILWRRDQVIAGLVGGAD.

The tract at residues 52–255 (PADIASYKLF…VIAGLVGGAD (204 aa)) is small GTPase-like. Residues 64–71 (GRSGAGKT) and 177–180 (TKLD) each bind GTP.

This sequence belongs to the small GTPase superfamily. Rab family.

It localises to the cytoplasm. It is found in the cytoskeleton. The protein resides in the cilium basal body. Its function is as follows. Potential effector of the planar cell polarity signaling pathway. Plays a role in targeted membrane trafficking most probably at the level of vesicle fusion with membranes. Involved in cilium biogenesis by regulating the transport of cargo proteins to the basal body and to the apical tips of cilia. More generally involved in exocytosis in secretory cells. The polypeptide is Ciliogenesis and planar polarity effector 2 (cplane2) (Xenopus tropicalis (Western clawed frog)).